The sequence spans 336 residues: RHOMBOID-like protein 12, mitochondrial (336 aa).

A mitochondrion-targeting transit peptide spans 1–85; the sequence is MKAIFNRRVV…RGFFASALGN (85 aa). The next 6 membrane-spanning stretches (helical) occupy residues 135-155, 185-205, 216-236, 254-274, 276-296, and 307-327; these read VVLGLVIANAGVFVMWRVFNQ, IDIGHIVSNMIGLYFFGTSIA, LYLAGALGGSVFYLIHHAYMA, PGLGASGAVNAIMLLDIFLHP, ATLYLEFFIPVPAMLLGIFLI, and NSNISGSAHLGGAAVAAIAWA. The active-site Nucleophile is the Ser-259. His-315 serves as the catalytic Charge relay system.

It belongs to the peptidase S54 family.

Its subcellular location is the mitochondrion membrane. In terms of biological role, probable rhomboid-type serine protease that catalyzes intramembrane proteolysis. Unable to cleave either of the yeast Pcp1 substrates in yeast cells. This Arabidopsis thaliana (Mouse-ear cress) protein is RHOMBOID-like protein 12, mitochondrial.